The primary structure comprises 879 residues: DNA mismatch repair protein MutS (879 aa).

An ATP-binding site is contributed by 629-636 (GPNMAGKS). A disordered region spans residues 824 to 845 (VGGQPQKELSEHKPHQPSLFAP).

Belongs to the DNA mismatch repair MutS family.

This protein is involved in the repair of mismatches in DNA. It is possible that it carries out the mismatch recognition step. This protein has a weak ATPase activity. This chain is DNA mismatch repair protein MutS, found in Desulfotalea psychrophila (strain LSv54 / DSM 12343).